Reading from the N-terminus, the 296-residue chain is NAD kinase (296 aa).

Aspartate 72 (proton acceptor) is an active-site residue. NAD(+)-binding positions include 72–73 (DG), 146–147 (ND), arginine 157, lysine 174, aspartate 176, 187–192 (TAYALS), and glutamine 247.

This sequence belongs to the NAD kinase family. Requires a divalent metal cation as cofactor.

It is found in the cytoplasm. It carries out the reaction NAD(+) + ATP = ADP + NADP(+) + H(+). Its function is as follows. Involved in the regulation of the intracellular balance of NAD and NADP, and is a key enzyme in the biosynthesis of NADP. Catalyzes specifically the phosphorylation on 2'-hydroxyl of the adenosine moiety of NAD to yield NADP. This chain is NAD kinase, found in Pseudomonas putida (strain W619).